A 281-amino-acid chain; its full sequence is Cytochrome c oxidase subunit 3 (281 aa).

7 helical membrane-spanning segments follow: residues 34–54 (PWPI…VMTF), 59–79 (NGLF…TLWF), 103–123 (GFVL…WAFF), 148–168 (WEVP…VTYA), 179–199 (VIYG…FQGF), 220–240 (ATGF…VGLF), and 259–279 (ILYW…VYWW).

It belongs to the cytochrome c oxidase subunit 3 family. As to quaternary structure, component of the cytochrome c oxidase (complex IV, CIV), a multisubunit enzyme composed of a catalytic core of 3 subunits and several supernumerary subunits. The complex exists as a monomer or a dimer and forms supercomplexes (SCs) in the inner mitochondrial membrane with ubiquinol-cytochrome c oxidoreductase (cytochrome b-c1 complex, complex III, CIII).

The protein localises to the mitochondrion inner membrane. It carries out the reaction 4 Fe(II)-[cytochrome c] + O2 + 8 H(+)(in) = 4 Fe(III)-[cytochrome c] + 2 H2O + 4 H(+)(out). Its function is as follows. Component of the cytochrome c oxidase, the last enzyme in the mitochondrial electron transport chain which drives oxidative phosphorylation. The respiratory chain contains 3 multisubunit complexes succinate dehydrogenase (complex II, CII), ubiquinol-cytochrome c oxidoreductase (cytochrome b-c1 complex, complex III, CIII) and cytochrome c oxidase (complex IV, CIV), that cooperate to transfer electrons derived from NADH and succinate to molecular oxygen, creating an electrochemical gradient over the inner membrane that drives transmembrane transport and the ATP synthase. Cytochrome c oxidase is the component of the respiratory chain that catalyzes the reduction of oxygen to water. Electrons originating from reduced cytochrome c in the intermembrane space (IMS) are transferred via the dinuclear copper A center (CU(A)) of subunit 2 and heme A of subunit 1 to the active site in subunit 1, a binuclear center (BNC) formed by heme A3 and copper B (CU(B)). The BNC reduces molecular oxygen to 2 water molecules using 4 electrons from cytochrome c in the IMS and 4 protons from the mitochondrial matrix. The polypeptide is Cytochrome c oxidase subunit 3 (COX3) (Rhizopus stolonifer (Rhizopus nigricans)).